We begin with the raw amino-acid sequence, 160 residues long: Protein D14 (160 aa).

The polypeptide is Protein D14 (D14) (Escherichia phage T5 (Enterobacteria phage T5)).